The following is a 423-amino-acid chain: Histidinol dehydrogenase (423 aa).

NAD(+) is bound by residues Y116, Q177, and N200. Substrate-binding residues include S223, Q245, and H248. Residues Q245 and H248 each contribute to the Zn(2+) site. Active-site proton acceptor residues include E313 and H314. The substrate site is built by H314, D347, E401, and H406. Zn(2+) is bound at residue D347. H406 contributes to the Zn(2+) binding site.

Belongs to the histidinol dehydrogenase family. Requires Zn(2+) as cofactor.

It carries out the reaction L-histidinol + 2 NAD(+) + H2O = L-histidine + 2 NADH + 3 H(+). It functions in the pathway amino-acid biosynthesis; L-histidine biosynthesis; L-histidine from 5-phospho-alpha-D-ribose 1-diphosphate: step 9/9. Catalyzes the sequential NAD-dependent oxidations of L-histidinol to L-histidinaldehyde and then to L-histidine. The chain is Histidinol dehydrogenase from Staphylococcus saprophyticus subsp. saprophyticus (strain ATCC 15305 / DSM 20229 / NCIMB 8711 / NCTC 7292 / S-41).